A 164-amino-acid chain; its full sequence is Galectin-3 (164 aa).

The Galectin domain occupies 9-154 (STVDLSEPLK…FSDVLGVTVL (146 aa)). 6 residues coordinate a carbohydrate: N45, R64, N73, R81, E84, and N138.

As to quaternary structure, homotetramer. Oligomerization is required for carbohydrate binding.

The protein localises to the secreted. It is found in the extracellular space. Its subcellular location is the extracellular matrix. The protein resides in the cell wall. In terms of biological role, binds complex carbohydrates, such as chitooligosaccharides. Does not bind lactose. May play a role in fruiting body formation. The chain is Galectin-3 (Cgl3) from Coprinopsis cinerea (Inky cap fungus).